Here is a 295-residue protein sequence, read N- to C-terminus: Nucleotide-binding protein PEPE_0450 (295 aa).

12–19 (GMSGAGKT) serves as a coordination point for ATP. 62–65 (DLRS) lines the GTP pocket.

It belongs to the RapZ-like family.

In terms of biological role, displays ATPase and GTPase activities. This is Nucleotide-binding protein PEPE_0450 from Pediococcus pentosaceus (strain ATCC 25745 / CCUG 21536 / LMG 10740 / 183-1w).